The sequence spans 193 residues: DNA damage-inducible transcript 4-like protein (193 aa).

The protein belongs to the DDIT4 family. Up-regulated in atherosclerotic plaques relative to healthy segments of the same artery.

It is found in the cytoplasm. Inhibits cell growth by regulating the TOR signaling pathway upstream of the TSC1-TSC2 complex and downstream of AKT1. This chain is DNA damage-inducible transcript 4-like protein (DDIT4L), found in Homo sapiens (Human).